The sequence spans 261 residues: uncharacterized protein (261 aa).

The segment covering 1-12 has biased composition (polar residues); the sequence is MSRTSSQNQEII. The segment at 1–139 is disordered; that stretch reads MSRTSSQNQE…KELDTINKKT (139 aa). The span at 23–55 shows a compositional bias: low complexity; sequence SSKPSKSSKPSKSSKPSKSSKTSKSSRSSGSKS. Positions 65-74 are enriched in basic and acidic residues; it reads SRKDKYKEEY. Over residues 79-108 the composition is skewed to acidic residues; sequence YPDEQEYEQEYEQEYEQEYQDNGEQTEEFV. The segment covering 122-139 has biased composition (basic and acidic residues); sequence DERQTQSNKELDTINKKT. Coiled-coil stretches lie at residues 151-181 and 218-243; these read MDHDDNIKRLNAKMKAFKDAKKQEEESIIKL and EDIIRDALMEVVRNERKVAELVKKIE.

This is an uncharacterized protein from Acanthamoeba polyphaga (Amoeba).